The primary structure comprises 142 residues: Hemoglobin subunit beta-2 (142 aa).

Residues 2–142 (SLTDEEKHLI…VTEALSCQYH (141 aa)) enclose the Globin domain. Residues His-59 and His-88 each contribute to the heme b site.

Belongs to the globin family. Heterotetramer of two alpha chains and two beta chains. Red blood cells.

Its function is as follows. Involved in oxygen transport from the lung to the various peripheral tissues. In Torpedo marmorata (Marbled electric ray), this protein is Hemoglobin subunit beta-2 (HBB2).